The sequence spans 443 residues: D-inositol 3-phosphate glycosyltransferase (443 aa).

Residue histidine 30 coordinates 1D-myo-inositol 3-phosphate. Residues 36 to 37 (QP) and glycine 44 each bind UDP-N-acetyl-alpha-D-glucosamine. Residues 41–46 (DAGGMN), lysine 99, tyrosine 132, threonine 156, and arginine 176 contribute to the 1D-myo-inositol 3-phosphate site. Residues arginine 250, lysine 255, and arginine 316 each coordinate UDP-N-acetyl-alpha-D-glucosamine. Residues phenylalanine 325, arginine 326, and cysteine 328 each contribute to the Mg(2+) site. 2 residues coordinate UDP-N-acetyl-alpha-D-glucosamine: glutamate 338 and glutamate 346. Mg(2+) is bound at residue threonine 352.

This sequence belongs to the glycosyltransferase group 1 family. MshA subfamily. As to quaternary structure, homodimer.

It catalyses the reaction 1D-myo-inositol 3-phosphate + UDP-N-acetyl-alpha-D-glucosamine = 1D-myo-inositol 2-acetamido-2-deoxy-alpha-D-glucopyranoside 3-phosphate + UDP + H(+). Functionally, catalyzes the transfer of a N-acetyl-glucosamine moiety to 1D-myo-inositol 3-phosphate to produce 1D-myo-inositol 2-acetamido-2-deoxy-glucopyranoside 3-phosphate in the mycothiol biosynthesis pathway. The chain is D-inositol 3-phosphate glycosyltransferase from Stackebrandtia nassauensis (strain DSM 44728 / CIP 108903 / NRRL B-16338 / NBRC 102104 / LLR-40K-21).